Consider the following 241-residue polypeptide: Ribonuclease 3 (241 aa).

In terms of domain architecture, RNase III spans 16–144 (HAEFEKKINY…VIGAIFQDGG (129 aa)). Residue E57 coordinates Mg(2+). Catalysis depends on residues D61 and E133. E133 is a Mg(2+) binding site. The DRBM domain maps to 171–240 (DAKSRLQEIL…AALAIKKIES (70 aa)).

This sequence belongs to the ribonuclease III family. Homodimer. Mg(2+) serves as cofactor.

The protein resides in the cytoplasm. It carries out the reaction Endonucleolytic cleavage to 5'-phosphomonoester.. Digests double-stranded RNA. Involved in the processing of primary rRNA transcript to yield the immediate precursors to the large and small rRNAs (23S and 16S). Processes some mRNAs, and tRNAs when they are encoded in the rRNA operon. Processes pre-crRNA and tracrRNA of type II CRISPR loci if present in the organism. This chain is Ribonuclease 3, found in Desulfotalea psychrophila (strain LSv54 / DSM 12343).